The following is a 211-amino-acid chain: uncharacterized protein (211 aa).

The stretch at 105 to 143 (IEENEFDKVRKSSDKLINEIEKTKSSLREDVKTALSEVR) forms a coiled coil. The helical transmembrane segment at 191–211 (QWFTGFVGVVSSVVLIILFYF) threads the bilayer.

The protein belongs to the CCDC90 family.

The protein resides in the mitochondrion. It is found in the membrane. This is an uncharacterized protein from Schizosaccharomyces pombe (strain 972 / ATCC 24843) (Fission yeast).